The following is a 383-amino-acid chain: Na(+)/H(+) antiporter NhaA (383 aa).

The next 11 membrane-spanning stretches (helical) occupy residues 14 to 34, 47 to 67, 87 to 107, 117 to 137, 146 to 166, 171 to 191, 205 to 225, 252 to 272, 280 to 300, 321 to 341, and 356 to 376; these read AGGI…NSPL, FGMS…FLLI, IFPA…YVAF, GWAI…ALLG, VFLL…IALF, LSSM…MLNA, AILW…GVVI, VAFG…LEGV, MLPL…IFSF, IFAV…ISSL, and LGIL…LHFS.

Belongs to the NhaA Na(+)/H(+) (TC 2.A.33) antiporter family.

It localises to the cell inner membrane. It carries out the reaction Na(+)(in) + 2 H(+)(out) = Na(+)(out) + 2 H(+)(in). The catalysed reaction is Li(+)(in) + 2 H(+)(out) = Li(+)(out) + 2 H(+)(in). With respect to regulation, activity is regulated by pH. Active at alkaline pH. Amiloride strongly reduces affinity for Na(+), but does not change the Vmax. Na(+)/H(+) antiporter that extrudes sodium in exchange for external protons. Can also transport lithium and potassium. This Vibrio parahaemolyticus serotype O3:K6 (strain RIMD 2210633) protein is Na(+)/H(+) antiporter NhaA.